Reading from the N-terminus, the 483-residue chain is Protein nucleotidyltransferase YdiU (483 aa).

ATP contacts are provided by glycine 87, glycine 89, arginine 90, lysine 110, aspartate 122, glycine 123, arginine 173, and arginine 180. The active-site Proton acceptor is aspartate 249. The Mg(2+) site is built by asparagine 250 and aspartate 259. Position 259 (aspartate 259) interacts with ATP.

It belongs to the SELO family. Mg(2+) serves as cofactor. It depends on Mn(2+) as a cofactor.

It carries out the reaction L-seryl-[protein] + ATP = 3-O-(5'-adenylyl)-L-seryl-[protein] + diphosphate. It catalyses the reaction L-threonyl-[protein] + ATP = 3-O-(5'-adenylyl)-L-threonyl-[protein] + diphosphate. The enzyme catalyses L-tyrosyl-[protein] + ATP = O-(5'-adenylyl)-L-tyrosyl-[protein] + diphosphate. The catalysed reaction is L-histidyl-[protein] + UTP = N(tele)-(5'-uridylyl)-L-histidyl-[protein] + diphosphate. It carries out the reaction L-seryl-[protein] + UTP = O-(5'-uridylyl)-L-seryl-[protein] + diphosphate. It catalyses the reaction L-tyrosyl-[protein] + UTP = O-(5'-uridylyl)-L-tyrosyl-[protein] + diphosphate. Nucleotidyltransferase involved in the post-translational modification of proteins. It can catalyze the addition of adenosine monophosphate (AMP) or uridine monophosphate (UMP) to a protein, resulting in modifications known as AMPylation and UMPylation. This chain is Protein nucleotidyltransferase YdiU, found in Pectobacterium carotovorum subsp. carotovorum (strain PC1).